Reading from the N-terminus, the 70-residue chain is Protein SlyX homolog (70 aa).

The disordered stretch occupies residues 51-70 (RMREAEANRPGPTNEPPPHY).

Belongs to the SlyX family.

The chain is Protein SlyX homolog from Nitrobacter hamburgensis (strain DSM 10229 / NCIMB 13809 / X14).